The sequence spans 914 residues: Protein translocase subunit SecA (914 aa).

ATP is bound by residues Gln87, 105-109 (GEGKT), and Asp508. The Zn(2+) site is built by Cys898, Cys900, Cys909, and His910.

Belongs to the SecA family. Monomer and homodimer. Part of the essential Sec protein translocation apparatus which comprises SecA, SecYEG and auxiliary proteins SecDF-YajC and YidC. Zn(2+) serves as cofactor.

The protein resides in the cell inner membrane. It localises to the cytoplasm. It carries out the reaction ATP + H2O + cellular proteinSide 1 = ADP + phosphate + cellular proteinSide 2.. Part of the Sec protein translocase complex. Interacts with the SecYEG preprotein conducting channel. Has a central role in coupling the hydrolysis of ATP to the transfer of proteins into and across the cell membrane, serving both as a receptor for the preprotein-SecB complex and as an ATP-driven molecular motor driving the stepwise translocation of polypeptide chains across the membrane. The sequence is that of Protein translocase subunit SecA from Xylella fastidiosa (strain 9a5c).